A 549-amino-acid chain; its full sequence is Cation/acetate symporter ActP (549 aa).

13 consecutive transmembrane segments (helical) span residues 33–53 (WQAIIMFLIFVVFTLGITYWA), 77–97 (LAIAGDYMSAASFLGISALVF), 103–123 (GLIYSLGFLVGWPIILFLIAE), 148–168 (ILSACGSLVVVALYLIAQMVG), 183–203 (IAVVLVGVLMMMYVLFGGMLA), 206–226 (WVQIIKAVLLLFGASFMAFMV), 262–282 (ISALSLGLGLMFGTAGLPHIL), 303–323 (GFMGYFYILTFIIGFGAIMLV), 355–375 (LFLGFISAVAFATILAVVAGL), 404–424 (VSKITVLVLGVIAIILGILFE), 428–448 (IAFMVGLAFAIAASCNFPIIL), 464–484 (GGWLGLLTAVVLMILGPTIWV), and 493–513 (IFPYEYPALFSISVAFLGIWF).

Belongs to the sodium:solute symporter (SSF) (TC 2.A.21) family.

The protein localises to the cell inner membrane. In terms of biological role, transports acetate. This Salmonella newport (strain SL254) protein is Cation/acetate symporter ActP.